Consider the following 278-residue polypeptide: Phosphonates import ATP-binding protein PhnC 2 (278 aa).

The region spanning 5 to 253 (IRVDSLNKTF…FLNELYGAEG (249 aa)) is the ABC transporter domain. 37–44 (GASGSGKS) provides a ligand contact to ATP.

This sequence belongs to the ABC transporter superfamily. Phosphonates importer (TC 3.A.1.9.1) family. The complex is composed of two ATP-binding proteins (PhnC), two transmembrane proteins (PhnE) and a solute-binding protein (PhnD).

Its subcellular location is the cell inner membrane. It catalyses the reaction phosphonate(out) + ATP + H2O = phosphonate(in) + ADP + phosphate + H(+). In terms of biological role, part of the ABC transporter complex PhnCDE involved in phosphonates import. Responsible for energy coupling to the transport system. The protein is Phosphonates import ATP-binding protein PhnC 2 of Pseudomonas aeruginosa (strain ATCC 15692 / DSM 22644 / CIP 104116 / JCM 14847 / LMG 12228 / 1C / PRS 101 / PAO1).